We begin with the raw amino-acid sequence, 264 residues long: Thymidylate synthase (264 aa).

Residue arginine 21 coordinates dUMP. Histidine 51 provides a ligand contact to (6R)-5,10-methylene-5,6,7,8-tetrahydrofolate. 126–127 (RR) contacts dUMP. Residue cysteine 146 is the Nucleophile of the active site. DUMP-binding positions include 166 to 169 (RSAD), asparagine 177, and 207 to 209 (HIY). A (6R)-5,10-methylene-5,6,7,8-tetrahydrofolate-binding site is contributed by aspartate 169. Alanine 263 is a (6R)-5,10-methylene-5,6,7,8-tetrahydrofolate binding site.

It belongs to the thymidylate synthase family. Bacterial-type ThyA subfamily. In terms of assembly, homodimer.

The protein localises to the cytoplasm. The catalysed reaction is dUMP + (6R)-5,10-methylene-5,6,7,8-tetrahydrofolate = 7,8-dihydrofolate + dTMP. Its pathway is pyrimidine metabolism; dTTP biosynthesis. Catalyzes the reductive methylation of 2'-deoxyuridine-5'-monophosphate (dUMP) to 2'-deoxythymidine-5'-monophosphate (dTMP) while utilizing 5,10-methylenetetrahydrofolate (mTHF) as the methyl donor and reductant in the reaction, yielding dihydrofolate (DHF) as a by-product. This enzymatic reaction provides an intracellular de novo source of dTMP, an essential precursor for DNA biosynthesis. In Vesicomyosocius okutanii subsp. Calyptogena okutanii (strain HA), this protein is Thymidylate synthase.